The sequence spans 483 residues: Aspartyl/glutamyl-tRNA(Asn/Gln) amidotransferase subunit B (483 aa).

It belongs to the GatB/GatE family. GatB subfamily. Heterotrimer of A, B and C subunits.

The catalysed reaction is L-glutamyl-tRNA(Gln) + L-glutamine + ATP + H2O = L-glutaminyl-tRNA(Gln) + L-glutamate + ADP + phosphate + H(+). It catalyses the reaction L-aspartyl-tRNA(Asn) + L-glutamine + ATP + H2O = L-asparaginyl-tRNA(Asn) + L-glutamate + ADP + phosphate + 2 H(+). In terms of biological role, allows the formation of correctly charged Asn-tRNA(Asn) or Gln-tRNA(Gln) through the transamidation of misacylated Asp-tRNA(Asn) or Glu-tRNA(Gln) in organisms which lack either or both of asparaginyl-tRNA or glutaminyl-tRNA synthetases. The reaction takes place in the presence of glutamine and ATP through an activated phospho-Asp-tRNA(Asn) or phospho-Glu-tRNA(Gln). This Rickettsia rickettsii (strain Iowa) protein is Aspartyl/glutamyl-tRNA(Asn/Gln) amidotransferase subunit B.